The following is a 396-amino-acid chain: Putative nickel insertion protein (396 aa).

Belongs to the LarC family.

This chain is Putative nickel insertion protein, found in Methanococcoides burtonii (strain DSM 6242 / NBRC 107633 / OCM 468 / ACE-M).